The chain runs to 177 residues: Large ribosomal subunit protein uL5 (177 aa).

The protein belongs to the universal ribosomal protein uL5 family. Part of the 50S ribosomal subunit. Interacts with protein L18 and the 5S rRNA, and probably with tRNAs. Forms a bridge to the 30S subunit in the 70S ribosome.

Its function is as follows. This is 1 of 5 proteins that mediates the attachment of the 5S rRNA onto the large ribosomal subunit, stabilizing the orientation of adjacent RNA domains. Forms part of the central protuberance. Modeling places the A and P site tRNAs in close proximity to this protein; the 5S rRNA and some of its associated proteins might help stabilize positioning of ribosome-bound tRNAs. In the 70S ribosome it is thought to contact protein S13 of the 30S subunit (bridge B1b), connecting the 2 subunits; this bridge is implicated in subunit movement. The chain is Large ribosomal subunit protein uL5 (rpl5) from Haloarcula marismortui (strain ATCC 43049 / DSM 3752 / JCM 8966 / VKM B-1809) (Halobacterium marismortui).